Reading from the N-terminus, the 280-residue chain is Virginiamycin B lyase (280 aa).

Histidine 215 serves as a coordination point for substrate. Residue glutamate 254 coordinates Mg(2+). Histidine 256 acts as the Proton acceptor in catalysis. Glutamate 271 is a binding site for Mg(2+).

Belongs to the Vgb family. Monomer. The cofactor is Mg(2+).

In terms of biological role, inactivates the type B streptogramin antibiotics by linearizing the lactone ring at the ester linkage, generating a free phenylglycine carboxylate and converting the threonyl moiety into 2-amino-butenoic acid. In Mycobacterium sp. (strain JLS), this protein is Virginiamycin B lyase.